The primary structure comprises 344 residues: Protein-arginine kinase (344 aa).

Residues 14-244 (IVLSSRIRLA…KQIIQQERLA (231 aa)) enclose the Phosphagen kinase C-terminal domain. ATP-binding positions include 17 to 21 (SSRIR), H81, R115, 166 to 170 (RASAM), and 197 to 202 (RGLYGE).

Belongs to the ATP:guanido phosphotransferase family.

The enzyme catalyses L-arginyl-[protein] + ATP = N(omega)-phospho-L-arginyl-[protein] + ADP + H(+). Its function is as follows. Catalyzes the specific phosphorylation of arginine residues in proteins. This Clostridium novyi (strain NT) protein is Protein-arginine kinase.